We begin with the raw amino-acid sequence, 297 residues long: Nitrogenase iron protein (297 aa).

11–18 (GKGGIGKS) contacts ATP. Cysteine 99 serves as a coordination point for [4Fe-4S] cluster. Arginine 102 is modified (ADP-ribosylarginine; by dinitrogenase reductase ADP-ribosyltransferase). Cysteine 133 is a [4Fe-4S] cluster binding site.

This sequence belongs to the NifH/BchL/ChlL family. Homodimer. [4Fe-4S] cluster serves as cofactor. The reversible ADP-ribosylation of Arg-102 inactivates the nitrogenase reductase and regulates nitrogenase activity.

The enzyme catalyses N2 + 8 reduced [2Fe-2S]-[ferredoxin] + 16 ATP + 16 H2O = H2 + 8 oxidized [2Fe-2S]-[ferredoxin] + 2 NH4(+) + 16 ADP + 16 phosphate + 6 H(+). In terms of biological role, the key enzymatic reactions in nitrogen fixation are catalyzed by the nitrogenase complex, which has 2 components: the iron protein and the molybdenum-iron protein. This Mesorhizobium japonicum (strain LMG 29417 / CECT 9101 / MAFF 303099) (Mesorhizobium loti (strain MAFF 303099)) protein is Nitrogenase iron protein.